The sequence spans 247 residues: Pyridoxine 5'-phosphate synthase (247 aa).

Asn12 contacts 3-amino-2-oxopropyl phosphate. Position 14–15 (14–15) interacts with 1-deoxy-D-xylulose 5-phosphate; the sequence is DH. 3-amino-2-oxopropyl phosphate is bound at residue Arg23. His48 acts as the Proton acceptor in catalysis. The 1-deoxy-D-xylulose 5-phosphate site is built by Arg50 and His55. Glu75 acts as the Proton acceptor in catalysis. Thr105 contributes to the 1-deoxy-D-xylulose 5-phosphate binding site. His196 (proton donor) is an active-site residue. Residues Gly197 and 218–219 contribute to the 3-amino-2-oxopropyl phosphate site; that span reads GH.

The protein belongs to the PNP synthase family. Homooctamer; tetramer of dimers.

It is found in the cytoplasm. The catalysed reaction is 3-amino-2-oxopropyl phosphate + 1-deoxy-D-xylulose 5-phosphate = pyridoxine 5'-phosphate + phosphate + 2 H2O + H(+). It functions in the pathway cofactor biosynthesis; pyridoxine 5'-phosphate biosynthesis; pyridoxine 5'-phosphate from D-erythrose 4-phosphate: step 5/5. Functionally, catalyzes the complicated ring closure reaction between the two acyclic compounds 1-deoxy-D-xylulose-5-phosphate (DXP) and 3-amino-2-oxopropyl phosphate (1-amino-acetone-3-phosphate or AAP) to form pyridoxine 5'-phosphate (PNP) and inorganic phosphate. This chain is Pyridoxine 5'-phosphate synthase, found in Pseudomonas fluorescens (strain Pf0-1).